The following is a 165-amino-acid chain: Protein NKG7 (165 aa).

4 helical membrane passes run 9 to 29 (LLTS…NFWF), 61 to 81 (FCIL…MSCI), 92 to 112 (IVST…MTVY), and 133 to 153 (FYLG…SLGA).

The protein belongs to the PMP-22/EMP/MP20 family.

The protein localises to the cell membrane. It localises to the cytolytic granule membrane. Regulates cytotoxic granule exocytosis in effector lymphocytes, thus acting as a critical mediator of inflammation in a broad range of infectious and non-infectious diseases. Essential for cytotoxic degranulation of natural killer (NK) cells and CD8(+) T-cells and for the activation of CD4(+) T-cells following infection. Plays a critical role in CD8(+) T-cell and NK cell-mediated cytolysis of target cells and contributes to the cytolytic activity via the perforin/granzyme pathway by enhancing exocytosis of LAMP1-carrying lytic granules. Contributes to NK cell-mediated control of cancer metastasis. The protein is Protein NKG7 (NKG7) of Bos taurus (Bovine).